The sequence spans 579 residues: Insulin-like growth factor 2 mRNA-binding protein 3 (579 aa).

2 consecutive RRM domains span residues 2–75 (NKLY…HSVP) and 81–156 (RKLQ…YIPD). A disordered region spans residues 158–192 (TAAQQNPSPQLRGRRGPGQRGSSRQASPGSVSKQK). Serine 165 bears the Phosphoserine mark. Serine 184 bears the Phosphoserine; by MTOR mark. KH domains are found at residues 195–260 (DLPL…CKSI), 276–343 (EIPL…EEEI), and 405–470 (TETV…QGRI). Glycyl lysine isopeptide (Lys-Gly) (interchain with G-Cter in SUMO2) cross-links involve residues lysine 450 and lysine 475. The KH 4 domain occupies 487–553 (KLEAHIRVPS…YACQVAQRKI (67 aa)). Residue threonine 528 is modified to Phosphothreonine.

Belongs to the RRM IMP/VICKZ family. Can form homooligomers and heterooligomers with IGF2BP1 and IGF2BP3 in an RNA-dependent manner. Interacts with IGF2BP1. Interacts with ELAVL1, DHX9, HNRNPU, MATR3 and PABPC1. As to expression, expressed in oocytes, spermatogonia and spermatocytes (at protein level).

It localises to the nucleus. The protein resides in the cytoplasm. The protein localises to the P-body. Its subcellular location is the stress granule. Its function is as follows. RNA-binding factor that may recruit target transcripts to cytoplasmic protein-RNA complexes (mRNPs). This transcript 'caging' into mRNPs allows mRNA transport and transient storage. It also modulates the rate and location at which target transcripts encounter the translational apparatus and shields them from endonuclease attacks or microRNA-mediated degradation. Preferentially binds to N6-methyladenosine (m6A)-containing mRNAs and increases their stability. Binds to the 3'-UTR of CD44 mRNA and stabilizes it, hence promotes cell adhesion and invadopodia formation. Binds to beta-actin/ACTB and MYC transcripts. Increases MYC mRNA stability by binding to the coding region instability determinant (CRD) and binding is enhanced by m6A-modification of the CRD. Binds to the 5'-UTR of the insulin-like growth factor 2 (IGF2) mRNAs. This Mus musculus (Mouse) protein is Insulin-like growth factor 2 mRNA-binding protein 3 (Igf2bp3).